Reading from the N-terminus, the 194-residue chain is MRTATITRTTKETTITISLNLDQQSGIQIATGIGFFDHMLDAFAKHGRFGLTVDAQGDLDVDPHHTIEDTGIVLGECFKQALGDKAGIERFGSAFVPMDESLARAVVDLSGRAYLVFDAELTNQRLGGFDTEVTEDFFQAVAFAGEFNLHASVLYGRNTHHKIEALFKALGRSLRAAVAINPEVQGIPSTKGVI.

Belongs to the imidazoleglycerol-phosphate dehydratase family.

The protein resides in the cytoplasm. It catalyses the reaction D-erythro-1-(imidazol-4-yl)glycerol 3-phosphate = 3-(imidazol-4-yl)-2-oxopropyl phosphate + H2O. The protein operates within amino-acid biosynthesis; L-histidine biosynthesis; L-histidine from 5-phospho-alpha-D-ribose 1-diphosphate: step 6/9. This Lacticaseibacillus casei (strain BL23) (Lactobacillus casei) protein is Imidazoleglycerol-phosphate dehydratase.